Reading from the N-terminus, the 284-residue chain is Cell division protein DivIB (284 aa).

The tract at residues 1–21 (MFGKRKDSKNKAMRDNEELTP) is disordered. At 1 to 63 (MFGKRKDSKN…GLRKRRLQKR (63 aa)) the chain is on the cytoplasmic side. Residues 64 to 84 (VITLASIFGISAIISLYAILP) traverse the membrane as a helical segment. The Extracellular segment spans residues 85–284 (VSRVSNIEIE…VGAYAYPYBK (200 aa)). The POTRA domain occupies 86 to 156 (SRVSNIEIEG…NVVKFKVTEY (71 aa)).

This sequence belongs to the FtsQ/DivIB family. DivIB subfamily.

The protein resides in the cell membrane. Its function is as follows. Cell division protein that may be involved in stabilizing or promoting the assembly of the division complex. This Ligilactobacillus salivarius (strain CECT 5713) (Lactobacillus salivarius) protein is Cell division protein DivIB.